Here is an 864-residue protein sequence, read N- to C-terminus: Leucine--tRNA ligase (864 aa).

The 'HIGH' region motif lies at 42–52; it reads PYPSGRLHMGH. The short motif at 621-625 is the 'KMSKS' region element; the sequence is KMSKS. Lysine 624 serves as a coordination point for ATP.

It belongs to the class-I aminoacyl-tRNA synthetase family.

The protein localises to the cytoplasm. The enzyme catalyses tRNA(Leu) + L-leucine + ATP = L-leucyl-tRNA(Leu) + AMP + diphosphate. The sequence is that of Leucine--tRNA ligase from Alkalilimnicola ehrlichii (strain ATCC BAA-1101 / DSM 17681 / MLHE-1).